The primary structure comprises 241 residues: uncharacterized protein (241 aa).

Its subcellular location is the cytoplasm. The protein localises to the nucleus. This is an uncharacterized protein from Schizosaccharomyces pombe (strain 972 / ATCC 24843) (Fission yeast).